Reading from the N-terminus, the 561-residue chain is Probable oligo-1,6-glucosidase 2 (561 aa).

Aspartate 199 serves as the catalytic Nucleophile. Glutamate 255 serves as the catalytic Proton donor.

It belongs to the glycosyl hydrolase 13 family.

It is found in the cytoplasm. The enzyme catalyses Hydrolysis of (1-&gt;6)-alpha-D-glucosidic linkages in some oligosaccharides produced from starch and glycogen by alpha-amylase, and in isomaltose.. In Bacillus subtilis (strain 168), this protein is Probable oligo-1,6-glucosidase 2 (ycdG).